Here is a 493-residue protein sequence, read N- to C-terminus: Dipeptide permease D (493 aa).

The next 13 membrane-spanning stretches (helical) occupy residues 14–34, 49–69, 91–111, 138–158, 167–187, 212–232, 235–255, 267–287, 312–332, 344–364, 379–399, 413–433, and 458–478; these read VVAL…LLIL, ELFS…GYLA, LVLG…AIIV, GGFS…PIAC, WAMG…IFLC, NWGW…VLFW, WSVY…AKIY, LGLI…AQQG, MFQS…AWLV, IWGK…ILTL, LMVL…PVAM, VLTG…AGVI, and VFEQ…LIWL.

This sequence belongs to the major facilitator superfamily. Proton-dependent oligopeptide transporter (POT/PTR) (TC 2.A.17) family. DtpD subfamily.

It is found in the cell inner membrane. Probable proton-dependent permease that transports dipeptides. The sequence is that of Dipeptide permease D from Salmonella choleraesuis (strain SC-B67).